A 550-amino-acid chain; its full sequence is Chaperonin GroEL (550 aa).

ATP is bound by residues 30-33 (TLGP), Lys51, 87-91 (DGTTT), Gly415, 479-481 (NAA), and Asp495.

The protein belongs to the chaperonin (HSP60) family. In terms of assembly, forms a cylinder of 14 subunits composed of two heptameric rings stacked back-to-back. Interacts with the co-chaperonin GroES.

The protein resides in the cytoplasm. It carries out the reaction ATP + H2O + a folded polypeptide = ADP + phosphate + an unfolded polypeptide.. Its function is as follows. Together with its co-chaperonin GroES, plays an essential role in assisting protein folding. The GroEL-GroES system forms a nano-cage that allows encapsulation of the non-native substrate proteins and provides a physical environment optimized to promote and accelerate protein folding. The sequence is that of Chaperonin GroEL from Polynucleobacter asymbioticus (strain DSM 18221 / CIP 109841 / QLW-P1DMWA-1) (Polynucleobacter necessarius subsp. asymbioticus).